A 916-amino-acid polypeptide reads, in one-letter code: Nitrate reductase [NADH] 1 (916 aa).

Residues 1–77 (MAASVQPRQF…DDEEEEQEDW (77 aa)) form a disordered region. Over residues 66–76 (GSDDEEEEQED) the composition is skewed to acidic residues. Cys-192 is a Mo-molybdopterin binding site. One can recognise a Cytochrome b5 heme-binding domain in the interval 541-616 (GKQFTMSEVR…LDTYRIGELI (76 aa)). Residues His-576 and His-599 each contribute to the heme site. One can recognise an FAD-binding FR-type domain in the interval 656 to 768 (RDKVPCQLVD…KGPLGHVEYT (113 aa)). FAD is bound by residues 708–711 (RAYT), 725–729 (LIKVY), Phe-730, Phe-737, 742–744 (LMT), Ser-792, and Thr-795.

The protein belongs to the nitrate reductase family. Homodimer. FAD is required as a cofactor. The cofactor is heme. It depends on Mo-molybdopterin as a cofactor.

The enzyme catalyses nitrite + NAD(+) + H2O = nitrate + NADH + H(+). Functionally, nitrate reductase is a key enzyme involved in the first step of nitrate assimilation in plants, fungi and bacteria. The chain is Nitrate reductase [NADH] 1 (NIA1) from Oryza sativa subsp. japonica (Rice).